A 2073-amino-acid polypeptide reads, in one-letter code: Non-reducing polyketide synthase cla3 (2073 aa).

An N-terminal acylcarrier protein transacylase domain (SAT) region spans residues 9–242 (LLFGDYTEPW…EKLNIHALQH (234 aa)). The region spanning 363-793 (SGRIAIVGMS…GGNGCLLLEE (431 aa)) is the Ketosynthase family 3 (KS3) domain. Catalysis depends on for beta-ketoacyl synthase activity residues Cys-538, His-673, and His-712. A malonyl-CoA:ACP transacylase (MAT) domain region spans residues 898–1198 (TFTGQGSQYA…KIMSTLDATG (301 aa)). Ser-987 functions as the For acyl/malonyl transferase activity in the catalytic mechanism. A product template (PT) domain region spans residues 1276-1590 (STCAQYVITE…QNVILERLLG (315 aa)). The segment at 1279–1420 (AQYVITETKT…AGLESQWEKS (142 aa)) is N-terminal hotdog fold. In terms of domain architecture, PKS/mFAS DH spans 1279–1586 (AQYVITETKT…FHRVQNVILE (308 aa)). Catalysis depends on His-1311, which acts as the Proton acceptor; for dehydratase activity. Residues 1439 to 1586 (QGHRIQRDIY…FHRVQNVILE (148 aa)) form a C-terminal hotdog fold region. The active-site Proton donor; for dehydratase activity is Asp-1500. Residues 1594 to 1637 (SSSVPAQASDPLRSKRSPQEARSLPGEAKTEKPGSTIATTSPVL) are disordered. Residues 1641–1718 (KSEQGMFQAL…NLRCAFDEDV (78 aa)) enclose the Carrier domain. Ser-1678 bears the O-(pantetheine 4'-phosphoryl)serine mark. A compositionally biased stretch (polar residues) spans 1721 to 1738 (EFTDSEVTSGTPNSSESV). Residues 1721-1786 (EFTDSEVTSG…GVLDDGSPQP (66 aa)) are disordered. Over residues 1747–1774 (PEEHAFKEPKDDSPLARRDMDNSNDRSL) the composition is skewed to basic and acidic residues. The thioesterase (TE) domain stretch occupies residues 1805 to 1950 (FLIADGSGSI…MQQHLRAIFK (146 aa)). The active-site For thioesterase activity is the His-2058.

It functions in the pathway secondary metabolite biosynthesis. Functionally, highly reducing polyketide synthase; part of the gene cluster that mediates the biosynthesis of cladosporin, a tricyclic octaketide that acts as an antimalarial agent though inhibition of the Plasmodium falciparum lysyl-tRNA synthetase. The highly reducing polyketide synthase cla2 is responsible for biosynthesis up to the pentaketide stage, including of the tetrahydropyran (THP) ring, whereas the three subsequent ketide extensions with no reduction are catalyzed by the non-reducing polyketide synthase cla3. The protein is Non-reducing polyketide synthase cla3 of Cladosporium cladosporioides.